The chain runs to 212 residues: ATP phosphoribosyltransferase (212 aa).

It belongs to the ATP phosphoribosyltransferase family. Short subfamily. As to quaternary structure, heteromultimer composed of HisG and HisZ subunits.

It is found in the cytoplasm. It catalyses the reaction 1-(5-phospho-beta-D-ribosyl)-ATP + diphosphate = 5-phospho-alpha-D-ribose 1-diphosphate + ATP. It functions in the pathway amino-acid biosynthesis; L-histidine biosynthesis; L-histidine from 5-phospho-alpha-D-ribose 1-diphosphate: step 1/9. Functionally, catalyzes the condensation of ATP and 5-phosphoribose 1-diphosphate to form N'-(5'-phosphoribosyl)-ATP (PR-ATP). Has a crucial role in the pathway because the rate of histidine biosynthesis seems to be controlled primarily by regulation of HisG enzymatic activity. In Albidiferax ferrireducens (strain ATCC BAA-621 / DSM 15236 / T118) (Rhodoferax ferrireducens), this protein is ATP phosphoribosyltransferase.